Here is a 544-residue protein sequence, read N- to C-terminus: MTLSVPDCAEMNRIRMSNHRKMSLGSAPLIANGRPSPPPRRTSLAESIRTLAFTARRNSSPLYRKSTKKLKKSRLVGKNGICNVYNTNVPKKDRQYLRDIFTTMIDVKWRWMLMLFASAFVLSWSIFGTTYYLIALVHGDLSLPTPVNHTACVMNLDSVYSSFLFAVETHHTIGYGHRYITTECYLAGAIVCLQAICALLLQSFMVGIVFAKMARPKKRAETIIFSDKAVICLRDGQLCFLCRVGDMRNTHLVEAHVRLQFITDRETNEGEIEPLHQFEMKVGPSIADDDRLFLVWPTTLCHVIDSRSPLYNYNQQTLMSAQFEIIVLLEGIVESTGMTAQAKTSYLPSEVLWGHRFRKLVTYQRSNGSYQIDYDLFHSTYPVRTPAMSPAEFYSSKPNLKDYYCHDSHEHKLEDNRSSDSTPLPSPSPYSYPSTPLNHFQSSSNSPVFSNNHSKFNTEAVTCEAGMLCPPTIVVQCPSTCASPNHMRRTRNQMDKSRTSSSCDLTRPSTALSDLEEECSDSGSPTKCQSPPVVPIHIEIVSET.

The Cytoplasmic portion of the chain corresponds to 1 to 109; sequence MTLSVPDCAE…IFTTMIDVKW (109 aa). A helical transmembrane segment spans residues 110-134; sequence RWMLMLFASAFVLSWSIFGTTYYLI. At 135-158 the chain is on the extracellular side; it reads ALVHGDLSLPTPVNHTACVMNLDS. An intramembrane region (helical; Pore-forming) is located at residues 159–170; it reads VYSSFLFAVETH. An intramembrane region (pore-forming) is located at residues 171–177; that stretch reads HTIGYGH. The Selectivity filter motif lies at 172–177; it reads TIGYGH. Residues 178 to 186 are Extracellular-facing; it reads RYITTECYL. The chain crosses the membrane as a helical span at residues 187–208; it reads AGAIVCLQAICALLLQSFMVGI. Residues 209-544 are Cytoplasmic-facing; the sequence is VFAKMARPKK…PIHIEIVSET (336 aa). 2 disordered regions span residues 411-448 and 512-533; these read HKLE…NSPV and LSDL…SPPV. Positions 438 to 448 are enriched in polar residues; it reads NHFQSSSNSPV.

Belongs to the inward rectifier-type potassium channel (TC 1.A.2.1) family. As to expression, expressed in neurons in the head and tail with no expression detected in non-neuronal cells in these regions. Also detected in the egg-laying system of adult hermaphordites with strong expression in the HSN motor neurons and weak expression in vulval muscles.

The protein resides in the membrane. It is found in the perikaryon. It localises to the cell projection. Functionally, inward rectifier potassium channels are characterized by a greater tendency to allow potassium to flow into the cell rather than out of it. Required for modulation of the activity of the hermaphrodite-specific neurons (HSNs) by the G-protein coupled neuropeptide receptor egl-6 which in turn controls egg-laying behavior. The sequence is that of Inward rectifier potassium channel irk-1 (irk-1) from Caenorhabditis elegans.